The sequence spans 123 residues: Putative iron-sulfur cluster insertion protein ErpA (123 aa).

Iron-sulfur cluster is bound by residues cysteine 51, cysteine 115, and cysteine 117.

Belongs to the HesB/IscA family. As to quaternary structure, homodimer. Requires iron-sulfur cluster as cofactor.

Functionally, required for insertion of 4Fe-4S clusters. This Burkholderia cenocepacia (strain HI2424) protein is Putative iron-sulfur cluster insertion protein ErpA.